Consider the following 1722-residue polypeptide: Lymphocyte antigen 75 (1722 aa).

The N-terminal stretch at 1 to 27 is a signal peptide; that stretch reads MRTGWATPRRPAGLLMLLFWFFDLAEP. Residues 28 to 1666 lie on the Extracellular side of the membrane; the sequence is SGRAANDPFT…VVCKVPLGPD (1639 aa). The Ricin B-type lectin domain occupies 33 to 156; that stretch reads NDPFTIVHGN…ESLCDQPYHE (124 aa). Asn135 carries N-linked (GlcNAc...) asparagine glycosylation. The Fibronectin type-II domain occupies 164-211; it reads SYGRPCEFPFLIDGTWHHDCILDEDHSGPWCATTLNYEYDRKWGICLK. 4 disulfide bridges follow: Cys169–Cys194, Cys183–Cys209, Cys247–Cys340, and Cys317–Cys332. The region spanning 225-341 is the C-type lectin 1 domain; sequence QFGSCYQFNT…CEAQLPYVCR (117 aa). 2 N-linked (GlcNAc...) asparagine glycosylation sites follow: Asn345 and Asn377. C-type lectin domains lie at 368-486, 493-625, 652-778, and 818-931; these read NNGF…YVCK, NDAS…ICKK, ASLS…IYLR, and IEGS…FICE. Disulfide bonds link Cys389/Cys485 and Cys462/Cys477. N-linked (GlcNAc...) asparagine glycosylation occurs at Asn529. Cys597 and Cys614 are joined by a disulfide. Disulfide bonds link Cys840/Cys930 and Cys904/Cys922. Asn843 and Asn865 each carry an N-linked (GlcNAc...) asparagine glycan. At Tyr933 the chain carries Phosphotyrosine. N-linked (GlcNAc...) asparagine glycosylation is found at Asn934, Asn1076, and Asn1103. The 134-residue stretch at 958 to 1091 folds into the C-type lectin 6 domain; sequence FQNKCFLKIK…ERHFVSLCQK (134 aa). Cys1060 and Cys1080 are joined by a disulfide. The region spanning 1110-1222 is the C-type lectin 7 domain; the sequence is YLNNLYKIIP…DNQPGAICYY (113 aa). Cys1197 and Cys1211 form a disulfide bridge. N-linked (GlcNAc...) asparagine glycosylation is found at Asn1225, Asn1320, and Asn1392. The region spanning 1251-1374 is the C-type lectin 8 domain; the sequence is FQNCCYNFII…VIEEAVYFHQ (124 aa). 2 C-type lectin domains span residues 1401 to 1513 and 1542 to 1661; these read YEDG…ICYK and YKGH…VCKV. The cysteines at positions 1488 and 1502 are disulfide-linked. N-linked (GlcNAc...) asparagine glycosylation is found at Asn1593 and Asn1626. The cysteines at positions 1635 and 1650 are disulfide-linked. The chain crosses the membrane as a helical span at residues 1667–1691; the sequence is YTAIAIIVATLSILVLMGGLIWFLF. Topologically, residues 1692–1722 are cytoplasmic; sequence QRHRLHLAGFSSVRYAQGVNEDEIMLPSFHD. A phosphoserine mark is found at Ser1703 and Ser1719.

N-glycosylated. In terms of tissue distribution, expressed in spleen, thymus, colon and peripheral blood lymphocytes. Detected in myeloid and B-lymphoid cell lines. Isoform 2 and isoform 3 are expressed in malignant Hodgkin lymphoma cells called Hodgkin and Reed-Sternberg (HRS) cells.

Its subcellular location is the membrane. In terms of biological role, acts as an endocytic receptor to direct captured antigens from the extracellular space to a specialized antigen-processing compartment. Causes reduced proliferation of B-lymphocytes. The protein is Lymphocyte antigen 75 (LY75) of Homo sapiens (Human).